We begin with the raw amino-acid sequence, 122 residues long: Large ribosomal subunit protein uL14c (122 aa).

It belongs to the universal ribosomal protein uL14 family. As to quaternary structure, part of the 50S ribosomal subunit.

It localises to the plastid. The protein resides in the chloroplast. Binds to 23S rRNA. In Chara vulgaris (Common stonewort), this protein is Large ribosomal subunit protein uL14c.